The primary structure comprises 196 residues: Dehydrogenase RED3 (196 aa).

Residues Ser-47, Asp-74, Asn-101, Arg-134, Tyr-166, and Lys-170 each contribute to the NADP(+) site. Catalysis depends on Tyr-166, which acts as the Proton acceptor. Catalysis depends on Lys-170, which acts as the Lowers pKa of active site Tyr.

It belongs to the short-chain dehydrogenases/reductases (SDR) family.

The catalysed reaction is a primary alcohol + NAD(+) = an aldehyde + NADH + H(+). It catalyses the reaction a secondary alcohol + NAD(+) = a ketone + NADH + H(+). Its pathway is mycotoxin biosynthesis. Functionally, dehydrogenase; part of the Tox1B locus, one of the 2 loci that mediate the biosynthesis of T-toxin, a family of linear polyketides 37 to 45 carbons in length, of which the major component is 41 carbons, and which leads to high virulence to maize. One of the PKSs (PKS1 or PKS2) could synthesize a precursor, used subsequently by the other PKS as starter unit, to add additional carbons. Variability in the length of the final carbon backbone C35-47 could be achieved by varying the number of condensation cycles, or use of different starter or extender units or might be due to decarboxylation of the penultimate product, catalyzed by DEC1. Additional proteins are required for the biosynthesis of T-toxin, including oxidoreductases RED1, RED2, RED3, LAM1 and OXI1, as well as esterase TOX9. This is Dehydrogenase RED3 from Cochliobolus heterostrophus (strain C4 / ATCC 48331 / race T) (Southern corn leaf blight fungus).